A 113-amino-acid polypeptide reads, in one-letter code: Signal peptidase complex subunit 1 (113 aa).

Topologically, residues 1 to 32 are cytoplasmic; that stretch reads MDGMIAMLPAPLQQLSSHIDFQGQKVAERTYQ. The helical transmembrane segment at 33–53 threads the bilayer; the sequence is VILTLAGIIGFFVGYSTQQLS. The Lumenal segment spans residues 54-57; sequence YAMY. Residues 58–78 traverse the membrane as a helical segment; it reads TVMGAAVFTALIILPPWPFLF. Residues 79–113 lie on the Cytoplasmic side of the membrane; that stretch reads RKNPIVWQTPIEEQEASSSSDNEKKDKKKETKKTK. A disordered region spans residues 89–113; the sequence is IEEQEASSSSDNEKKDKKKETKKTK.

It belongs to the SPCS1 family. As to quaternary structure, component of the signal peptidase complex (SPC) composed of a catalytic subunit sec-11 and three accessory subunits spcs-1, spcs-2 and spcs-3. The complex induces a local thinning of the ER membrane which is used to measure the length of the signal peptide (SP) h-region of protein substrates. This ensures the selectivity of the complex towards h-regions shorter than 18-20 amino acids.

Its subcellular location is the endoplasmic reticulum membrane. Its function is as follows. Component of the signal peptidase complex (SPC) which catalyzes the cleavage of N-terminal signal sequences from nascent proteins as they are translocated into the lumen of the endoplasmic reticulum. Dispensable for SPC enzymatic activity. The chain is Signal peptidase complex subunit 1 from Caenorhabditis briggsae.